The following is a 168-amino-acid chain: Photosystem I assembly protein Ycf3 (168 aa).

TPR repeat units follow at residues A35–P68, S72–L105, and G120–N153.

This sequence belongs to the Ycf3 family.

The protein localises to the plastid. The protein resides in the chloroplast thylakoid membrane. In terms of biological role, essential for the assembly of the photosystem I (PSI) complex. May act as a chaperone-like factor to guide the assembly of the PSI subunits. In Drimys granadensis, this protein is Photosystem I assembly protein Ycf3.